A 1171-amino-acid polypeptide reads, in one-letter code: MSSSSSDENETTIHSSSNPGSSGIYSQLKAGSSKRPSVRHDVSDAEDDEEPYEGFRKDMNMEVDERITTLLSSLHFEHKRDVVTADEDDNKLRELHENIFSLITTEPDFHRRRRLKKALPASNCIREQVYYLRRKPITPPDSYYHRLNAALHTIVKESFGEEYRKVATVLGLVEALAEVLILEVHAFGIPETNAVEHRNIRKLIANALTNLTYGQILSKRRLCSYDGFIRCVVRIIIESPNITQVYAGLIRNLSWNADSGMSEALQPTVHALSLAAVYAHTHRFDVTAILSALWNLAGHSVENKRTICETPNCLKVLANILSPDARFTTLVDSASGILKYVSQYLATNSSHLELRSLLITRMLTLLKSSSFTCVTNTLGAIAHLIAKDPHMQQLIRQDAAAVQQLNVLRNSNREDIRKAVKEVLNTLNQPCSHRYGDMSHSVGGASGMLSEPQLQMQTSHHGYHGTASPRLLSLRATRASPGKYIHPSQQQHMQVPAPDQRSSSLPRHFAVQRNGFMMAQSFNQQMDPHQQQQQQQQQMIFQMQQQQMMIQTDDQQMRYLNQQQQQQQQQHYQQQIQRNQNVEPVLPVDDDLDIPTSTVMGTRSNSERSLGSMNPGSVMTTGGWNSTLDTAANSSRALSPVSFSDIPASPTMCAQVFNLPVHPEDNQMTTPPNHPSTQNTTHYSSGSANTMTRSDGTTVPIDNLITPTYATLNVTNNAARKTSEDLESPDDILPGPSLEVEEEGDYAIITGAEQKSDDDLLTRSIQEEMPTSSSTPKLKVSPRLNGFFSPSQKTTSSPAWSHPDTSPILKQTQRPKHHEMTTDSDRLLMESIMSEMPRSRVISPRLASGGQQYLDPEPDRSSHSKNEEADRRDAIIASHEPSDQGMNVGRGSSPQQQQLHRMESLESQASSEDSFGLNGYQEEHNTSSSAAHTMRIDKDDVVDASLPMDCVDDEDYDYTDDHFDDNYEEDYEDSNATQFDEGIDPQLTIDCSMISSGSGSSLQKAETTAGSRDSGALATSTPIGSVSSLPGVRRAKKVSINGKTRLPVPKTNGSLVDRVRKPVIEASRPRLPPKPSLLKGKQYHEEDLIENQTRDDTIYVNAPIVEAEQERIYMNALKHSQGSPSVNGTPPKSAIVSPYNYQKPPFTERSNGEINEKNVTPNPKQMLVTIV.

The tract at residues 1-54 (MSSSSSDENETTIHSSSNPGSSGIYSQLKAGSSKRPSVRHDVSDAEDDEEPYEG) is disordered. A required for interaction with bar-1 and hmp-2 region spans residues 1–481 (MSSSSSDENE…LSLRATRASP (481 aa)). The segment covering 15 to 26 (SSSNPGSSGIYS) has biased composition (low complexity). Residues 312 to 356 (NCLKVLANILSPDARFTTLVDSASGILKYVSQYLATNSSHLELRS) form an ARM repeat. Disordered regions lie at residues 587-617 (PVDD…NPGS), 662-699 (HPED…GTTV), 720-741 (RKTS…LEVE), 767-822 (EEMP…EMTT), 837-936 (PRSR…TMRI), and 995-1030 (SSGS…SSLP). The tract at residues 591–1171 (DLDIPTSTVM…NPKQMLVTIV (581 aa)) is required for interaction with pry-1. 2 stretches are compositionally biased toward polar residues: residues 595–617 (PTST…NPGS) and 666–697 (NQMT…SDGT). Positions 788-799 (FSPSQKTTSSPA) are enriched in polar residues. A compositionally biased stretch (basic and acidic residues) spans 857-874 (EPDRSSHSKNEEADRRDA). Polar residues-rich tracts occupy residues 890 to 913 (RGSS…SSED) and 1002 to 1028 (LQKA…SVSS).

Belongs to the adenomatous polyposis coli (APC) family. In terms of assembly, interacts (via N-terminus) with bar-1 and hmp-2; the interaction with hmp-2 is relatively weak. Interacts (via C-terminus) with pry-1 (via N-terminus). Probably associates with bar-1, gsk-3, pry-1 in a complex.

The protein resides in the cell junction. It is found in the adherens junction. The protein localises to the cytoplasm. It localises to the nucleus. In terms of biological role, has a role in endoderm cell specification and pharyngeal development. Required for the migration of epithelial cells, organization of the anterior seam cells and ceh-13 expression during embryo morphogenesis. Prevents hyperactivation of the Wnt signaling pathway during endoderm development, probably by preventing hmp-2 nuclear translocation. During larval development, apr-1 is required for expression of lin-39 in P3-8.p. Shown to negatively regulate Wnt signaling in vulval precursor cells. Has a role in cell division by establishing the polarity of the mother cell which forms the asymmetries of the daughter nuclei. Thought to regulate export of wrm-1 from the nucleus possibly as part of a complex involving pry-1. The protein is APC-related protein 1 of Caenorhabditis briggsae.